The following is a 575-amino-acid chain: Phosphoenolpyruvate-protein phosphotransferase (575 aa).

Catalysis depends on His-191, which acts as the Tele-phosphohistidine intermediate. The phosphoenolpyruvate site is built by Arg-298 and Arg-334. The Mg(2+) site is built by Glu-435 and Asp-459. Residues Asn-458–Asp-459 and Arg-469 contribute to the phosphoenolpyruvate site. Cys-506 (proton donor) is an active-site residue.

It belongs to the PEP-utilizing enzyme family. In terms of assembly, homodimer. Mg(2+) serves as cofactor.

Its subcellular location is the cytoplasm. The enzyme catalyses L-histidyl-[protein] + phosphoenolpyruvate = N(pros)-phospho-L-histidyl-[protein] + pyruvate. In terms of biological role, general (non sugar-specific) component of the phosphoenolpyruvate-dependent sugar phosphotransferase system (sugar PTS). This major carbohydrate active-transport system catalyzes the phosphorylation of incoming sugar substrates concomitantly with their translocation across the cell membrane. Enzyme I transfers the phosphoryl group from phosphoenolpyruvate (PEP) to the phosphoryl carrier protein (HPr). The sequence is that of Phosphoenolpyruvate-protein phosphotransferase (ptsI) from Lactococcus lactis subsp. lactis (strain IL1403) (Streptococcus lactis).